Reading from the N-terminus, the 468-residue chain is Ribulose bisphosphate carboxylase large chain (468 aa).

Lys4 is modified (N6,N6,N6-trimethyllysine). Residues Asn113 and Thr163 each coordinate substrate. The Proton acceptor role is filled by Lys165. Residue Lys167 coordinates substrate. Mg(2+)-binding residues include Lys191, Asp193, and Glu194. The residue at position 191 (Lys191) is an N6-carboxylysine. Catalysis depends on His284, which acts as the Proton acceptor. Arg285, His317, and Ser369 together coordinate substrate.

This sequence belongs to the RuBisCO large chain family. Type I subfamily. As to quaternary structure, heterohexadecamer of 8 large chains and 8 small chains; disulfide-linked. The disulfide link is formed within the large subunit homodimers. Mg(2+) serves as cofactor. In terms of processing, the disulfide bond which can form in the large chain dimeric partners within the hexadecamer appears to be associated with oxidative stress and protein turnover.

It is found in the plastid. The protein resides in the chloroplast. The enzyme catalyses 2 (2R)-3-phosphoglycerate + 2 H(+) = D-ribulose 1,5-bisphosphate + CO2 + H2O. It catalyses the reaction D-ribulose 1,5-bisphosphate + O2 = 2-phosphoglycolate + (2R)-3-phosphoglycerate + 2 H(+). Its function is as follows. RuBisCO catalyzes two reactions: the carboxylation of D-ribulose 1,5-bisphosphate, the primary event in carbon dioxide fixation, as well as the oxidative fragmentation of the pentose substrate in the photorespiration process. Both reactions occur simultaneously and in competition at the same active site. The chain is Ribulose bisphosphate carboxylase large chain from Pandorea jasminoides (Bower vine).